The primary structure comprises 1082 residues: Integrator complex subunit 3 homolog (1082 aa).

Disordered regions lie at residues Pro483–Asp563, Tyr923–Thr945, and Asp1005–Asp1082. Composition is skewed to low complexity over residues Pro517–Ala528 and Thr542–Thr555. Positions Lys936–Thr945 are enriched in polar residues. 2 stretches are compositionally biased toward low complexity: residues Ser1008 to Ser1018 and Glu1033 to Lys1056.

This sequence belongs to the Integrator subunit 3 family. Belongs to the multiprotein complex Integrator. The core complex associates with protein phosphatase 2A subunits, to form the Integrator-PP2A (INTAC) complex.

It is found in the nucleus. It localises to the cytoplasm. Component of the integrator complex, a multiprotein complex that terminates RNA polymerase II (Pol II) transcription in the promoter-proximal region of genes. The integrator complex provides a quality checkpoint during transcription elongation by driving premature transcription termination of transcripts that are unfavorably configured for transcriptional elongation: the complex terminates transcription by (1) catalyzing dephosphorylation of the C-terminal domain (CTD) of Pol II subunit Polr2A/Rbp1 and Spt5, and (2) degrading the exiting nascent RNA transcript via endonuclease activity. The integrator complex is also involved in the 3'-end processing of the U7 snRNA, and also the spliceosomal snRNAs U1, U2, U4 and U5. This is Integrator complex subunit 3 homolog from Anopheles gambiae (African malaria mosquito).